A 123-amino-acid chain; its full sequence is Heat-labile enterotoxin IIA, B chain (123 aa).

A signal peptide spans 1–19; it reads MSSKKIIGAFVLMTGILSG. The cysteines at positions 33 and 104 are disulfide-linked.

As to quaternary structure, heterohexamer of one A chain and of five B chains.

Functionally, the biological activity of the toxin is produced by the A chain, which activates intracellular adenyl cyclase. This Escherichia coli protein is Heat-labile enterotoxin IIA, B chain.